The chain runs to 315 residues: tRNA pseudouridine synthase B (315 aa).

The active-site Nucleophile is the Asp-54.

The protein belongs to the pseudouridine synthase TruB family. Type 1 subfamily.

The enzyme catalyses uridine(55) in tRNA = pseudouridine(55) in tRNA. In terms of biological role, responsible for synthesis of pseudouridine from uracil-55 in the psi GC loop of transfer RNAs. This Cupriavidus taiwanensis (strain DSM 17343 / BCRC 17206 / CCUG 44338 / CIP 107171 / LMG 19424 / R1) (Ralstonia taiwanensis (strain LMG 19424)) protein is tRNA pseudouridine synthase B.